The primary structure comprises 529 residues: Peptide chain release factor 3 (529 aa).

Residues 11–280 (AKRRTFAIIS…GLVEWAPAPM (270 aa)) enclose the tr-type G domain. Residues 20 to 27 (SHPDAGKT), 88 to 92 (DTPGH), and 142 to 145 (NKLD) each bind GTP.

The protein belongs to the TRAFAC class translation factor GTPase superfamily. Classic translation factor GTPase family. PrfC subfamily.

It localises to the cytoplasm. In terms of biological role, increases the formation of ribosomal termination complexes and stimulates activities of RF-1 and RF-2. It binds guanine nucleotides and has strong preference for UGA stop codons. It may interact directly with the ribosome. The stimulation of RF-1 and RF-2 is significantly reduced by GTP and GDP, but not by GMP. The chain is Peptide chain release factor 3 from Shigella dysenteriae serotype 1 (strain Sd197).